The sequence spans 126 residues: NADH-quinone oxidoreductase subunit A (126 aa).

The next 3 membrane-spanning stretches (helical) occupy residues 14 to 34 (FLYF…TSWF), 66 to 86 (FYLI…LYAW), and 96 to 116 (IGFV…FYLV).

Belongs to the complex I subunit 3 family. As to quaternary structure, NDH-1 is composed of 13 different subunits. Subunits NuoA, H, J, K, L, M, N constitute the membrane sector of the complex.

Its subcellular location is the cell membrane. It catalyses the reaction a quinone + NADH + 5 H(+)(in) = a quinol + NAD(+) + 4 H(+)(out). NDH-1 shuttles electrons from NADH, via FMN and iron-sulfur (Fe-S) centers, to quinones in the respiratory chain. The immediate electron acceptor for the enzyme in this species is believed to be ubiquinone. Couples the redox reaction to proton translocation (for every two electrons transferred, four hydrogen ions are translocated across the cytoplasmic membrane), and thus conserves the redox energy in a proton gradient. This is NADH-quinone oxidoreductase subunit A from Buchnera aphidicola subsp. Schizaphis graminum (strain Sg).